Here is a 377-residue protein sequence, read N- to C-terminus: Histone deacetylase 8 (377 aa).

The tract at residues 14 to 324 is histone deacetylase; the sequence is LPPVYIYSPE…WTYLTGVILG (311 aa). S39 is modified (phosphoserine). Substrate is bound at residue D101. The active-site Proton acceptor is the H143. G151 provides a ligand contact to substrate. 3 residues coordinate a divalent metal cation: D178, H180, and D267. Y306 is a binding site for substrate.

This sequence belongs to the histone deacetylase family. HD type 1 subfamily. In terms of assembly, interacts with CBFA2T3. Interacts with phosphorylated SMG5/EST1B; this interaction protects SMG5 from ubiquitin-mediated degradation. Associates with alpha-SMA (smooth muscle alpha-actin). It depends on a divalent metal cation as a cofactor. Phosphorylated by PKA on serine 39. Phosphorylation reduces deacetylase activity observed preferentially on histones H3 and H4.

It is found in the nucleus. The protein resides in the chromosome. The protein localises to the cytoplasm. The enzyme catalyses N(6)-acetyl-L-lysyl-[histone] + H2O = L-lysyl-[histone] + acetate. It carries out the reaction N(6)-acetyl-L-lysyl-[protein] + H2O = L-lysyl-[protein] + acetate. It catalyses the reaction N(6)-(2E)-butenoyl-L-lysyl-[protein] + H2O = (2E)-2-butenoate + L-lysyl-[protein]. With respect to regulation, its activity is inhibited by trichostatin A (TSA) and butyrate, 2 well known histone deacetylase inhibitors. Functionally, histone deacetylase that catalyzes the deacetylation of lysine residues on the N-terminal part of the core histones (H2A, H2B, H3 and H4). Histone deacetylation gives a tag for epigenetic repression and plays an important role in transcriptional regulation, cell cycle progression and developmental events. Histone deacetylases act via the formation of large multiprotein complexes. Also involved in the deacetylation of cohesin complex protein SMC3 regulating release of cohesin complexes from chromatin. May play a role in smooth muscle cell contractility. In addition to protein deacetylase activity, also has protein-lysine deacylase activity: acts as a protein decrotonylase by mediating decrotonylation ((2E)-butenoyl) of histones. This is Histone deacetylase 8 (Hdac8) from Rattus norvegicus (Rat).